A 290-amino-acid polypeptide reads, in one-letter code: 7-methylguanosine phosphate-specific 5'-nucleotidase B (290 aa).

Asp-39 functions as the Nucleophile in the catalytic mechanism. Mg(2+)-binding residues include Asp-39 and Asp-41. Asp-41 (proton donor) is an active-site residue. Glu-86 contributes to the CMP binding site. Position 86 (Glu-86) interacts with N(7)-methyl-GMP. Substrate contacts are provided by residues 154–155 (SA) and Lys-203. Asp-228 is a binding site for Mg(2+).

This sequence belongs to the pyrimidine 5'-nucleotidase family. In terms of assembly, monomer.

Its subcellular location is the cytoplasm. The catalysed reaction is N(7)-methyl-GMP + H2O = N(7)-methylguanosine + phosphate. The enzyme catalyses CMP + H2O = cytidine + phosphate. It carries out the reaction a ribonucleoside 5'-phosphate + H2O = a ribonucleoside + phosphate. Functionally, specifically hydrolyzes 7-methylguanosine monophosphate (m(7)GMP) to 7-methylguanosine and inorganic phosphate. The specific activity for m(7)GMP may protect cells against undesired salvage of m(7)GMP and its incorporation into nucleic acids. Also has weak activity for CMP. UMP and purine nucleotides are poor substrates. This chain is 7-methylguanosine phosphate-specific 5'-nucleotidase B (Nt5c3b-b), found in Xenopus laevis (African clawed frog).